A 417-amino-acid polypeptide reads, in one-letter code: Mast cell carboxypeptidase A (417 aa).

A signal peptide spans 1–15 (MRLILPVGLIATTLA). Positions 16 to 109 (IAPVRFDREK…IEKQFDVKED (94 aa)) are cleaved as a propeptide — activation peptide. In terms of domain architecture, Peptidase M14 spans 118 to 412 (KYNNWEKIVA…LAVKFIAKYI (295 aa)). Intrachain disulfides connect C173-C186 and C245-C268. Zn(2+) is bound by residues H176 and E179. Residue H304 coordinates Zn(2+). E378 serves as the catalytic Proton donor/acceptor.

It belongs to the peptidase M14 family. Zn(2+) serves as cofactor.

The protein localises to the cytoplasmic vesicle. It is found in the secretory vesicle. It catalyses the reaction Release of a C-terminal amino acid, but little or no action with -Asp, -Glu, -Arg, -Lys or -Pro.. In Homo sapiens (Human), this protein is Mast cell carboxypeptidase A (CPA3).